An 89-amino-acid polypeptide reads, in one-letter code: Small ribosomal subunit protein uS15 (89 aa).

Belongs to the universal ribosomal protein uS15 family. As to quaternary structure, part of the 30S ribosomal subunit. Forms a bridge to the 50S subunit in the 70S ribosome, contacting the 23S rRNA.

One of the primary rRNA binding proteins, it binds directly to 16S rRNA where it helps nucleate assembly of the platform of the 30S subunit by binding and bridging several RNA helices of the 16S rRNA. In terms of biological role, forms an intersubunit bridge (bridge B4) with the 23S rRNA of the 50S subunit in the ribosome. In Haemophilus influenzae (strain 86-028NP), this protein is Small ribosomal subunit protein uS15.